Reading from the N-terminus, the 203-residue chain is Outer-membrane lipoprotein LolB (203 aa).

The first 17 residues, 1–17 (MNRLFRLLPLASLVLTA), serve as a signal peptide directing secretion. The N-palmitoyl cysteine moiety is linked to residue Cys-18. Residue Cys-18 is the site of S-diacylglycerol cysteine attachment.

This sequence belongs to the LolB family. In terms of assembly, monomer.

It is found in the cell outer membrane. In terms of biological role, plays a critical role in the incorporation of lipoproteins in the outer membrane after they are released by the LolA protein. In Klebsiella pneumoniae (strain 342), this protein is Outer-membrane lipoprotein LolB.